The primary structure comprises 154 residues: ATP synthase subunit b (154 aa).

A helical membrane pass occupies residues 9–29 (AIAFVIFVWFCMKYVWPPLMA).

This sequence belongs to the ATPase B chain family. In terms of assembly, F-type ATPases have 2 components, F(1) - the catalytic core - and F(0) - the membrane proton channel. F(1) has five subunits: alpha(3), beta(3), gamma(1), delta(1), epsilon(1). F(0) has three main subunits: a(1), b(2) and c(10-14). The alpha and beta chains form an alternating ring which encloses part of the gamma chain. F(1) is attached to F(0) by a central stalk formed by the gamma and epsilon chains, while a peripheral stalk is formed by the delta and b chains.

Its subcellular location is the cell inner membrane. In terms of biological role, f(1)F(0) ATP synthase produces ATP from ADP in the presence of a proton or sodium gradient. F-type ATPases consist of two structural domains, F(1) containing the extramembraneous catalytic core and F(0) containing the membrane proton channel, linked together by a central stalk and a peripheral stalk. During catalysis, ATP synthesis in the catalytic domain of F(1) is coupled via a rotary mechanism of the central stalk subunits to proton translocation. Its function is as follows. Component of the F(0) channel, it forms part of the peripheral stalk, linking F(1) to F(0). The polypeptide is ATP synthase subunit b (Klebsiella pneumoniae subsp. pneumoniae (strain ATCC 700721 / MGH 78578)).